Here is a 523-residue protein sequence, read N- to C-terminus: Sialate O-acetylesterase (523 aa).

The N-terminal stretch at 1 to 23 (MVAPGLVLGLVLPLILWADRSAG) is a signal peptide. N-linked (GlcNAc...) asparagine glycosylation is found at Asn107, Asn138, Asn267, Asn290, Asn401, and Asn422.

As to expression, widely expressed with high expression in the testis, prostate, and colon.

Its subcellular location is the lysosome. The protein localises to the cytoplasm. It catalyses the reaction N-acetyl-9-O-acetylneuraminate + H2O = N-acetylneuraminate + acetate + H(+). The enzyme catalyses an Ac-O-9-sialoglycoconjugate + H2O = a sialoglycoconjugate + acetate + H(+). Functionally, catalyzes the removal of O-acetyl ester groups from position 9 of the free diacetylated sialate N-acetyl-9-O-acetylneuraminate (Neu5,9Ac2) in the cytosol and of the diacetylated sialate residues of sialylglycoconjugates in the lysosomes. Together with the sialate-O-acetyltransferase they regulate the balance of acetylated sialoglycoconjugates, key players in various processes such as cell-cell interactions, host-pathogen recognition, and tumor antigenicity. This Homo sapiens (Human) protein is Sialate O-acetylesterase (SIAE).